Reading from the N-terminus, the 597-residue chain is MDHIRNFSIIAHIDHGKSTLADRIIQLCGGLSDREMEAQVLDSMDIEKERGITIKAQTAALTYKARDGKVYNLNLIDTPGHVDFSYEVSRSLSACEGALLVVDASQGVEAQTVANCYTAIELGVEVVPVLNKIDLPQADPANAIQEIEDVIGIDAHDATPCSAKTGQGVEDVIEALIAKVPPPKGDASAPLQALIIDSWFDNYVGVVMLVRVVNGTLRPKDKALLMATGAQHLVEQVGVFSPKSVQRDSLTAGQVGFVIAGIKELKAAKVGDTITTLPRKAEAPLPGFKEVKPQVFAGLYPVEANQYEALRESLEKLRLNDASLMFEPEVSQALGFGFRCGFLGLLHMEIVQERLEREFDMDLITTAPTVVYQVQMRDGTMVTVENPAKMPDPSRIEAILEPIVTVNLYMPQEYVGSVITLCTQKRGSQINMSYHGKQVQLTYEIPMAEIVMDFFDRLKSVSRGYASMDYEFKEYRPSDVVKVDILINSDKVDALSVIVHRSNSQYRGREVAAKMREIIPRQMYDVAIQAAIGSNIIARENVKALRKNVLAKCYGGDISRKKKLLEKQKAGKKRMKQVGTVEIPQEAFLAILQVDDK.

The region spanning 2-184 (DHIRNFSIIA…ALIAKVPPPK (183 aa)) is the tr-type G domain. Residues 14 to 19 (DHGKST) and 131 to 134 (NKID) each bind GTP.

Belongs to the TRAFAC class translation factor GTPase superfamily. Classic translation factor GTPase family. LepA subfamily.

Its subcellular location is the cell inner membrane. It catalyses the reaction GTP + H2O = GDP + phosphate + H(+). Its function is as follows. Required for accurate and efficient protein synthesis under certain stress conditions. May act as a fidelity factor of the translation reaction, by catalyzing a one-codon backward translocation of tRNAs on improperly translocated ribosomes. Back-translocation proceeds from a post-translocation (POST) complex to a pre-translocation (PRE) complex, thus giving elongation factor G a second chance to translocate the tRNAs correctly. Binds to ribosomes in a GTP-dependent manner. This is Elongation factor 4 from Cupriavidus pinatubonensis (strain JMP 134 / LMG 1197) (Cupriavidus necator (strain JMP 134)).